The chain runs to 166 residues: Interleukin-3 (166 aa).

The first 26 residues, 1–26, serve as a signal peptide directing secretion; the sequence is MVLASSTTSIHTMLLLLLMLFHLGLQ. Asn-42 is a glycosylation site (N-linked (GlcNAc...) asparagine). 2 disulfide bridges follow: Cys-43–Cys-106 and Cys-105–Cys-166. The N-linked (GlcNAc...) asparagine; partial glycan is linked to Asn-112. A disordered region spans residues 145–166; the sequence is LTSRPPQPASGSVSPNRGTVEC.

It belongs to the IL-3 family. Monomer. Activated T-cells, mast cells, natural killer cells.

The protein localises to the secreted. Its function is as follows. Cytokine secreted predominantly by activated T-lymphocytes as well as mast cells and osteoblastic cells that controls the production and differentiation of hematopoietic progenitor cells into lineage-restricted cells. Also stimulates mature basophils, eosinophils, and monocytes to become functionally activated. In addition, plays an important role in neural cell proliferation and survival. Participates as well in bone homeostasis and inhibits osteoclast differentiation by preventing NF-kappa-B nuclear translocation and activation. Mechanistically, exerts its biological effects through a receptor composed of IL3RA subunit and a signal transducing subunit IL3RB. Receptor stimulation results in the rapid activation of JAK2 kinase activity leading to STAT5-mediated transcriptional program. Alternatively, contributes to cell survival under oxidative stress in non-hematopoietic systems by activating pathways mediated by PI3K/AKT and ERK. The protein is Interleukin-3 (Il3) of Mus musculus (Mouse).